The primary structure comprises 211 residues: Stromal cell-derived factor 2 (211 aa).

An N-terminal signal peptide occupies residues M1 to S18. MIR domains lie at L21–K75, G83–N138, and G139–G193.

It is found in the secreted. The polypeptide is Stromal cell-derived factor 2 (SDF2) (Bos taurus (Bovine)).